The chain runs to 503 residues: MNPPAYTSTSGSVASTGNCAICMSAISGLGKTLPCLHDFCFVCIQTWTSTSAQCPLCRTVVSSILHNITSDANYEEYEVIFDDEGYNEDAPLQIPEEPGVNVSPQPPVHSTANSASNTALMRSHAQPRVLAPDNSSVFQPSTSSHASFSSGFAPYSQTPPVGASNLEATRVSRSAVITPTTSTGPRLHLSPSSRSVSQRLQTLFGITKLPGVPTEPPAYAQAEAHFGQANGYGQHRGALHGSYPAVLTAQDTSQIPTRLPFRATDRDVMEVLNSHVICSLCWVGWDEQLATLFPPPIVEPTKTLILNYIAIYGVEDVKLKVSLRCLLHDLTVPFVENMLFLIDRCTDPTRISMQAWTWHDTPIRLLSGPIKSPDGGSTSQDTSVSNIHRSPPGGSSTQPSSGRRPGRPKGVKRRLFVDDDTGVSTNESVFPVINAPIHHKNSKLAALPTGSTTDSNERLVVESPGASAEQPSTSGSSPSPSRRRGRKQGIARIEMLTKKVRRK.

The RING-type zinc finger occupies Cys19 to Arg58. Disordered regions lie at residues Ala175 to Arg194, Ser367 to Asp418, and Ala445 to Lys503. Polar residues predominate over residues Gly375–His388. Residues Arg389–Arg403 show a composition bias toward low complexity. The segment covering Arg404–Arg414 has biased composition (basic residues). Positions Pro471–Pro480 are enriched in low complexity.

In terms of assembly, interacts with host BTRC; this interaction seems to inactivate SCF-mediated protein degradation in general.

The catalysed reaction is S-ubiquitinyl-[E2 ubiquitin-conjugating enzyme]-L-cysteine + [acceptor protein]-L-lysine = [E2 ubiquitin-conjugating enzyme]-L-cysteine + N(6)-ubiquitinyl-[acceptor protein]-L-lysine.. Functionally, RING-finger E3 ubiquitin ligase that degrades host SP100, one of the major components of ND10 nuclear bodies, thereby disrupting the organization of these bodies. Also plays a role in the inhibition of host NF-kappa-B pathway by blocking the SCF(BTRC)-mediated addition of ubiquitin chains to host IkappaBalpha/NFKBIA, thereby interfering with its degradation. The protein is E3 ubiquitin-protein ligase IE61 of Cercopithecine herpesvirus 9 (strain DHV) (CeHV-9).